The following is a 766-amino-acid chain: Coenzyme PQQ synthesis protein F (766 aa).

Position 49 (His49) interacts with Zn(2+). The active-site Proton acceptor is the Glu52. Zn(2+) is bound by residues His53 and Glu130.

The protein belongs to the peptidase M16 family. Zn(2+) serves as cofactor.

Its pathway is cofactor biosynthesis; pyrroloquinoline quinone biosynthesis. Its function is as follows. Required for coenzyme pyrroloquinoline quinone (PQQ) biosynthesis. It is thought that this protein is a protease that cleaves peptides bond in a small peptide (gene pqqA), providing the glutamate and tyrosine residues which are necessary for the synthesis of PQQ. The sequence is that of Coenzyme PQQ synthesis protein F (pqqF) from Pseudomonas putida (strain ATCC 47054 / DSM 6125 / CFBP 8728 / NCIMB 11950 / KT2440).